Here is a 157-residue protein sequence, read N- to C-terminus: Cytochrome c-type biogenesis protein CcmE (157 aa).

Over 1–8 (MHPVRKQR) the chain is Cytoplasmic. Residues 9 to 29 (LMTVLFIVIASSVAVGLMVFA) form a helical; Signal-anchor for type II membrane protein membrane-spanning segment. At 30-157 (LSKNLNLFYP…KTCEGLDYAS (128 aa)) the chain is on the periplasmic side. The heme site is built by H124 and Y128.

This sequence belongs to the CcmE/CycJ family.

The protein resides in the cell inner membrane. Heme chaperone required for the biogenesis of c-type cytochromes. Transiently binds heme delivered by CcmC and transfers the heme to apo-cytochromes in a process facilitated by CcmF and CcmH. The chain is Cytochrome c-type biogenesis protein CcmE from Saccharophagus degradans (strain 2-40 / ATCC 43961 / DSM 17024).